Here is a 196-residue protein sequence, read N- to C-terminus: Pyridoxal 5'-phosphate synthase subunit PdxT (196 aa).

Residue 46–48 (GES) participates in L-glutamine binding. C78 acts as the Nucleophile in catalysis. L-glutamine is bound by residues R110 and 138 to 139 (IR). Catalysis depends on charge relay system residues H174 and E176.

Belongs to the glutaminase PdxT/SNO family. In the presence of PdxS, forms a dodecamer of heterodimers. Only shows activity in the heterodimer.

The catalysed reaction is aldehydo-D-ribose 5-phosphate + D-glyceraldehyde 3-phosphate + L-glutamine = pyridoxal 5'-phosphate + L-glutamate + phosphate + 3 H2O + H(+). It carries out the reaction L-glutamine + H2O = L-glutamate + NH4(+). It participates in cofactor biosynthesis; pyridoxal 5'-phosphate biosynthesis. Functionally, catalyzes the hydrolysis of glutamine to glutamate and ammonia as part of the biosynthesis of pyridoxal 5'-phosphate. The resulting ammonia molecule is channeled to the active site of PdxS. This chain is Pyridoxal 5'-phosphate synthase subunit PdxT, found in Deinococcus radiodurans (strain ATCC 13939 / DSM 20539 / JCM 16871 / CCUG 27074 / LMG 4051 / NBRC 15346 / NCIMB 9279 / VKM B-1422 / R1).